Consider the following 458-residue polypeptide: Bone morphogenetic protein 3 (458 aa).

The N-terminal stretch at 1-23 (MAECRPWLVLWVGCCGCLCLALG) is a signal peptide. A propeptide spanning residues 24-348 (ELLNDGLLAV…EQTLKKARRK (325 aa)) is cleaved from the precursor. Asn-107 carries an N-linked (GlcNAc...) asparagine glycan. 2 disordered regions span residues 244 to 275 (DSVVSSLHGPHTPLALKPNRKTEKAEQRKKRS) and 303 to 335 (ERKPYKNLQGRQNEKDKNKKKLRKGSRQKSQTL). A compositionally biased stretch (basic residues) spans 320-329 (NKKKLRKGSR). Intrachain disulfides connect Cys-356–Cys-423, Cys-385–Cys-455, and Cys-389–Cys-457. An N-linked (GlcNAc...) asparagine glycan is attached at Asn-449.

This sequence belongs to the TGF-beta family. Homodimer. Can form heterodimers with ADMP, BMP-2-I and/or BMP-2-II, and DERRIERE.

It is found in the secreted. In terms of biological role, dorsalizing factor. Antagonizes mesoderm formation by ventralizing BMPs. The protein is Bone morphogenetic protein 3 (bmp3) of Xenopus laevis (African clawed frog).